A 227-amino-acid chain; its full sequence is UPF0758 protein LPC_1989 (227 aa).

One can recognise an MPN domain in the interval 102 to 225; the sequence is QLSNTQQTYA…YSIFAENKWV (124 aa). 3 residues coordinate Zn(2+): H173, H175, and D186. The JAMM motif signature appears at 173-186; sequence HNHPSGLSDASQQD.

The protein belongs to the UPF0758 family.

This chain is UPF0758 protein LPC_1989, found in Legionella pneumophila (strain Corby).